The primary structure comprises 163 residues: Nucleotide-binding protein HAPS_2236 (163 aa).

It belongs to the YajQ family.

Functionally, nucleotide-binding protein. The protein is Nucleotide-binding protein HAPS_2236 of Glaesserella parasuis serovar 5 (strain SH0165) (Haemophilus parasuis).